A 136-amino-acid chain; its full sequence is Large ribosomal subunit protein uL16 (136 aa).

It belongs to the universal ribosomal protein uL16 family. In terms of assembly, part of the 50S ribosomal subunit.

Its function is as follows. Binds 23S rRNA and is also seen to make contacts with the A and possibly P site tRNAs. This is Large ribosomal subunit protein uL16 from Vesicomyosocius okutanii subsp. Calyptogena okutanii (strain HA).